A 774-amino-acid chain; its full sequence is Effector protein hopW1-1 (774 aa).

Disordered stretches follow at residues 1–33 (MSPA…QSPQ) and 301–340 (CQAG…VPGQ). The span at 9–23 (TPHSFPPSFTGTSSS) shows a compositional bias: low complexity. The span at 24 to 33 (AENSHAQSPQ) shows a compositional bias: polar residues.

It belongs to the HopW family. As to quaternary structure, interacts (via C-terminus) with Arabidopsis WIN1, WIN2 and WIN3.

The protein resides in the secreted. Its function is as follows. Induces hypersensitive response (HR). In Pseudomonas syringae pv. maculicola, this protein is Effector protein hopW1-1 (hopW1-1).